Here is a 224-residue protein sequence, read N- to C-terminus: LOB domain-containing protein 15 (224 aa).

Residues 44 to 145 enclose the LOB domain; sequence TPCAACKLLR…AELTAVRSEI (102 aa). The disordered stretch occupies residues 171-224; it reads SGGVSVIAPPPQRPTTPPQPTTAHPPSPSSCVFSQPTTRDLEYGNIESENNYFG. Pro residues predominate over residues 178 to 198; that stretch reads APPPQRPTTPPQPTTAHPPSP.

It belongs to the LOB domain-containing protein family. As to expression, expressed in young shoots, roots, stems, leaves and flowers.

This is LOB domain-containing protein 15 (LBD15) from Arabidopsis thaliana (Mouse-ear cress).